The chain runs to 501 residues: Sensor histidine kinase PdtaS (501 aa).

Residues 4 to 150 (LGDLLAEHTV…HLETAYRLCA (147 aa)) are GAF. The segment at 179-291 (DGFIRLDVDG…TEVKRRDRAL (113 aa)) is PAS-like. Residues 300–495 (EIHHRVKNNL…DVVLRVPVGR (196 aa)) enclose the Histidine kinase domain. His303 carries the phosphohistidine; by autocatalysis modification.

In terms of processing, autophosphorylated.

Its subcellular location is the cytoplasm. It catalyses the reaction ATP + protein L-histidine = ADP + protein N-phospho-L-histidine.. In terms of biological role, member of the two-component regulatory system PdtaR/PdtaS. This two-component system plays an essential role in mycobacterial adaptation to poor nutrient conditions. Nutrient deprivation results in increasing intracellular concentrations of cyclic diguanosine monophosphate (c-di-GMP), which binds to the PdtaS sensor and promotes its autophosphorylation, leading to the activation of the signaling cascade. The phosphate group is then transferred to PdtaR. Functionally, in addition, the PdtaR/PdtaS two-component system controls copper and nitric oxide (NO) resistance downstream of the intramembrane protease Rip1. This coupled Rip1/PdtaS/PdtaR circuit controls NO resistance and acute lung infection in mice by relieving PdtaR/PdtaS-mediated repression of isonitrile chalkophore biosynthesis. Two signals are required to fully inactivate the PdtaR/PdtaS system and mediate NO resistance: a cytoplasmic inhibitory signal through the PdtaS kinase mediated by direct sensing of NO and the production of PPE1-5', an NO-induced small RNA, to sequester PdtaR. This chain is Sensor histidine kinase PdtaS (pdtaS), found in Mycobacterium tuberculosis (strain CDC 1551 / Oshkosh).